A 231-amino-acid polypeptide reads, in one-letter code: 5'-methylthioadenosine/S-adenosylhomocysteine nucleosidase (231 aa).

The active-site Proton acceptor is E13. Substrate-binding positions include G79, M154, and 175–176 (ME). D199 (proton donor) is an active-site residue.

It belongs to the PNP/UDP phosphorylase family. MtnN subfamily.

It catalyses the reaction S-adenosyl-L-homocysteine + H2O = S-(5-deoxy-D-ribos-5-yl)-L-homocysteine + adenine. It carries out the reaction S-methyl-5'-thioadenosine + H2O = 5-(methylsulfanyl)-D-ribose + adenine. The enzyme catalyses 5'-deoxyadenosine + H2O = 5-deoxy-D-ribose + adenine. It participates in amino-acid biosynthesis; L-methionine biosynthesis via salvage pathway; S-methyl-5-thio-alpha-D-ribose 1-phosphate from S-methyl-5'-thioadenosine (hydrolase route): step 1/2. In terms of biological role, catalyzes the irreversible cleavage of the glycosidic bond in both 5'-methylthioadenosine (MTA) and S-adenosylhomocysteine (SAH/AdoHcy) to adenine and the corresponding thioribose, 5'-methylthioribose and S-ribosylhomocysteine, respectively. Also cleaves 5'-deoxyadenosine, a toxic by-product of radical S-adenosylmethionine (SAM) enzymes, into 5-deoxyribose and adenine. This Marinomonas sp. (strain MWYL1) protein is 5'-methylthioadenosine/S-adenosylhomocysteine nucleosidase.